Here is a 440-residue protein sequence, read N- to C-terminus: Xylose isomerase (440 aa).

Catalysis depends on residues His-101 and Asp-104. Positions 232, 268, 271, 296, 307, 309, and 339 each coordinate Mg(2+).

Belongs to the xylose isomerase family. In terms of assembly, homotetramer. Mg(2+) is required as a cofactor.

It is found in the cytoplasm. It catalyses the reaction alpha-D-xylose = alpha-D-xylulofuranose. The sequence is that of Xylose isomerase from Escherichia coli O17:K52:H18 (strain UMN026 / ExPEC).